The sequence spans 666 residues: Galactocerebrosidase (666 aa).

The signal sequence occupies residues 1–22 (MIYKLYFAIALCFSLCFDLCIA). Substrate is bound at residue Thr91. N-linked (GlcNAc...) asparagine glycosylation occurs at Asn125. Substrate contacts are provided by Trp133 and Asn179. The Proton donor/acceptor role is filled by Glu180. The active-site Nucleophile is the Glu256. The cysteines at positions 269 and 376 are disulfide-linked. An N-linked (GlcNAc...) asparagine glycan is attached at Asn361. Arg378 lines the substrate pocket. Asn385, Asn390, Asn500, and Asn540 each carry an N-linked (GlcNAc...) asparagine glycan.

It belongs to the glycosyl hydrolase 59 family.

It localises to the lysosome. The catalysed reaction is a beta-D-galactosyl-(1&lt;-&gt;1')-N-acylsphing-4-enine + H2O = an N-acylsphing-4-enine + D-galactose. The enzyme catalyses beta-D-galactosyl-(1&lt;-&gt;1)-sphing-4-enine + H2O = sphing-4-enine + D-galactose. It catalyses the reaction a D-galactosylceramide + H2O = an N-acyl-sphingoid base + D-galactose. In terms of biological role, hydrolyzes the galactose ester bonds of glycolipids such as galactosylceramide and galactosylsphingosine. The protein is Galactocerebrosidase of Salmo salar (Atlantic salmon).